The following is a 254-amino-acid chain: Pimeloyl-[acyl-carrier protein] methyl ester esterase (254 aa).

Positions 16–242 constitute an AB hydrolase-1 domain; the sequence is LVLIHGWGMN…ASHAPFISHP (227 aa). Substrate contacts are provided by residues tryptophan 22, 82-83, and 143-147; these read SL and FLALQ. Serine 82 acts as the Nucleophile in catalysis. Active-site residues include aspartate 207 and histidine 235. Histidine 235 contributes to the substrate binding site.

It belongs to the AB hydrolase superfamily. Carboxylesterase BioH family. In terms of assembly, monomer.

The protein resides in the cytoplasm. The enzyme catalyses 6-carboxyhexanoyl-[ACP] methyl ester + H2O = 6-carboxyhexanoyl-[ACP] + methanol + H(+). Its pathway is cofactor biosynthesis; biotin biosynthesis. Functionally, the physiological role of BioH is to remove the methyl group introduced by BioC when the pimeloyl moiety is complete. It allows to synthesize pimeloyl-ACP via the fatty acid synthetic pathway through the hydrolysis of the ester bonds of pimeloyl-ACP esters. This Photobacterium profundum (strain SS9) protein is Pimeloyl-[acyl-carrier protein] methyl ester esterase.